Reading from the N-terminus, the 421-residue chain is 4-hydroxy-3-methylbut-2-en-1-yl diphosphate synthase (flavodoxin) (421 aa).

[4Fe-4S] cluster-binding residues include Cys-298, Cys-301, Cys-344, and Glu-351.

It belongs to the IspG family. The cofactor is [4Fe-4S] cluster.

It catalyses the reaction (2E)-4-hydroxy-3-methylbut-2-enyl diphosphate + oxidized [flavodoxin] + H2O + 2 H(+) = 2-C-methyl-D-erythritol 2,4-cyclic diphosphate + reduced [flavodoxin]. The protein operates within isoprenoid biosynthesis; isopentenyl diphosphate biosynthesis via DXP pathway; isopentenyl diphosphate from 1-deoxy-D-xylulose 5-phosphate: step 5/6. In terms of biological role, converts 2C-methyl-D-erythritol 2,4-cyclodiphosphate (ME-2,4cPP) into 1-hydroxy-2-methyl-2-(E)-butenyl 4-diphosphate. The sequence is that of 4-hydroxy-3-methylbut-2-en-1-yl diphosphate synthase (flavodoxin) from Neisseria meningitidis serogroup B (strain ATCC BAA-335 / MC58).